We begin with the raw amino-acid sequence, 109 residues long: Sperm-specific class P protein 9/11 (109 aa).

One can recognise an MSP domain in the interval 2–109 (SLTADPPACT…TVTIPMSATA (108 aa)).

In terms of tissue distribution, expressed at higher level in testis.

This Caenorhabditis elegans protein is Sperm-specific class P protein 9/11 (ssp-9).